The primary structure comprises 225 residues: Ribose-5-phosphate isomerase A (225 aa).

Positions 1–20 (MKQSGGTEAQKRRAGKQAAD) are disordered. Residues 32-35 (TGST), 86-89 (DGAD), and 98-101 (KGGG) each bind substrate. The Proton acceptor role is filled by Glu-107. Substrate is bound at residue Lys-125.

This sequence belongs to the ribose 5-phosphate isomerase family. In terms of assembly, homodimer.

It catalyses the reaction aldehydo-D-ribose 5-phosphate = D-ribulose 5-phosphate. The protein operates within carbohydrate degradation; pentose phosphate pathway; D-ribose 5-phosphate from D-ribulose 5-phosphate (non-oxidative stage): step 1/1. Its function is as follows. Catalyzes the reversible conversion of ribose-5-phosphate to ribulose 5-phosphate. The sequence is that of Ribose-5-phosphate isomerase A from Natronomonas pharaonis (strain ATCC 35678 / DSM 2160 / CIP 103997 / JCM 8858 / NBRC 14720 / NCIMB 2260 / Gabara) (Halobacterium pharaonis).